A 481-amino-acid chain; its full sequence is ATP synthase subunit beta, chloroplastic (481 aa).

Position 163–170 (163–170 (GGAGVGKT)) interacts with ATP.

It belongs to the ATPase alpha/beta chains family. F-type ATPases have 2 components, CF(1) - the catalytic core - and CF(0) - the membrane proton channel. CF(1) has five subunits: alpha(3), beta(3), gamma(1), delta(1), epsilon(1). CF(0) has four main subunits: a(1), b(1), b'(1) and c(9-12).

Its subcellular location is the plastid. The protein localises to the chloroplast thylakoid membrane. It carries out the reaction ATP + H2O + 4 H(+)(in) = ADP + phosphate + 5 H(+)(out). Produces ATP from ADP in the presence of a proton gradient across the membrane. The catalytic sites are hosted primarily by the beta subunits. The chain is ATP synthase subunit beta, chloroplastic from Tupiella akineta (Green alga).